The chain runs to 335 residues: Calcium-binding protein TgpCaBP (335 aa).

The chain crosses the membrane as a helical span at residues 30-50 (LPLCVFSLFLFSFAFSALSGA). 4 EF-hand domains span residues 113–148 (MHQHQVRMEFQAIDKDNDGKVSLSELEATYVDSLDQ), 153–188 (QHKKEVEQRFKTVDKDNDGLLDLSEIRILMDPGKDE), 190–225 (LMKIEIEEILNAQDKNGDRKITVTEFIETEGTGSLN), and 227–262 (VEKTELEKEFKSYDLNADGAIDVEELQQIIKDPHSH). Residues Asp126, Asp128, Asp130, Lys132, Glu137, Asp166, Asp168, Asp170, Glu177, Asp203, Asn205, Asp207, Lys209, Glu214, Asp240, Asn242, Asp244, and Glu251 each contribute to the Ca(2+) site. A Prevents secretion from ER motif is present at residues 332–335 (HDEL).

The protein localises to the endoplasmic reticulum membrane. Its subcellular location is the cytoplasm. It is found in the cytosol. Functionally, calcium-binding protein. Participates in the efflux of intracellular Ca(2+) and storage of Ca(2+) in the endoplasmic reticulum. Required for gliding, host cell invasion and egress. Required for microneme secretion. The chain is Calcium-binding protein TgpCaBP from Toxoplasma gondii.